A 673-amino-acid chain; its full sequence is Probable urea active transporter 2 (673 aa).

14 helical membrane passes run 8 to 28 (GYGY…MAII), 83 to 103 (IMGG…FLFL), 132 to 152 (VYLF…LLGG), 164 to 184 (TVAA…LGGL), 196 to 218 (VMIY…LIGS), 249 to 269 (MMYL…GDPG), 287 to 307 (LMGG…AGLA), 336 to 356 (IYGM…VMLF), 391 to 411 (QLVR…GALS), 424 to 446 (LLTF…LFWN), 451 to 471 (FSLV…WLAS), 492 to 512 (FVGN…LSYI), 559 to 579 (IGIN…ALLG), and 592 to 612 (LIIV…LFPL).

This sequence belongs to the sodium:solute symporter (SSF) (TC 2.A.21) family.

It localises to the endoplasmic reticulum membrane. Its function is as follows. Involved in active transport of urea. The protein is Probable urea active transporter 2 (dur3-2) of Schizosaccharomyces pombe (strain 972 / ATCC 24843) (Fission yeast).